A 438-amino-acid chain; its full sequence is Glucose-6-phosphate isomerase (438 aa).

E289 functions as the Proton donor in the catalytic mechanism. Active-site residues include H310 and K424.

The protein belongs to the GPI family.

The protein localises to the cytoplasm. The enzyme catalyses alpha-D-glucose 6-phosphate = beta-D-fructose 6-phosphate. It functions in the pathway carbohydrate biosynthesis; gluconeogenesis. Its pathway is carbohydrate degradation; glycolysis; D-glyceraldehyde 3-phosphate and glycerone phosphate from D-glucose: step 2/4. In terms of biological role, catalyzes the reversible isomerization of glucose-6-phosphate to fructose-6-phosphate. The sequence is that of Glucose-6-phosphate isomerase from Oenococcus oeni (strain ATCC BAA-331 / PSU-1).